Reading from the N-terminus, the 351-residue chain is MQTYGNPNVTYAWYAGNSGTTNRSGKFIAAHAAHAGLMMFWAGAFTLFELARYDSSIPMGNQNLICLPHLAGLGIGGVSNGVITEPYGCTVIAVLHLIFSGVLGAGGLLHSMRYEGDLGNYPEGSRAKKFDFEWDDPDRLTFILGHHLIFLGLGNIQFVEWARIHGIYDSAQGITRTVNYNLDLGMIWNHQADFLTINSLEDVMGGHAFLAFFLIIGGAFHIATKQYGQYTEFKGKGLLSAESVLSYSLAGVAYCAFVAAFWCATNTTIYPTDLYGEVLSLKFEFAPYFVDTADLPADAHTARAWLSNVHFYLGFFFLQGHLWHALRGMGFDFKRVGKAFDNMESAKITAG.

Transmembrane regions (helical) follow at residues Phe27–Leu47, Leu64–Thr84, Cys89–Leu109, Val203–Ala223, Val244–Ala264, and Leu306–Leu326.

Belongs to the PsbB/PsbC family. IsiA/Pcb subfamily. As to quaternary structure, the antenna complex consists of divinyl chlorophylls (a and b) and divinyl chlorophyll a/b binding proteins and binds more divinyl chlorophyll b than does the antenna complex from high-light-adapted Prochlorococcus. Divinyl chlorophyll a serves as cofactor. The cofactor is divinyl chlorophyll b.

The protein resides in the cellular thylakoid membrane. Its function is as follows. The antenna complex functions as a light receptor, it captures and delivers excitation energy to photosystems II and I. The Prochlorales pcb genes are not related to higher plant LHCs. The chain is Divinyl chlorophyll a/b light-harvesting protein PcbC (pcbC) from Prochlorococcus marinus (strain SARG / CCMP1375 / SS120).